The chain runs to 185 residues: Ribosome-recycling factor (185 aa).

It belongs to the RRF family.

The protein localises to the cytoplasm. In terms of biological role, responsible for the release of ribosomes from messenger RNA at the termination of protein biosynthesis. May increase the efficiency of translation by recycling ribosomes from one round of translation to another. The protein is Ribosome-recycling factor of Oceanobacillus iheyensis (strain DSM 14371 / CIP 107618 / JCM 11309 / KCTC 3954 / HTE831).